The primary structure comprises 414 residues: Putative L-lactate dehydrogenase (414 aa).

The region spanning 29–406 (RRLGAALTIQ…SPRHVTQLRR (378 aa)) is the FMN hydroxy acid dehydrogenase domain. Tyrosine 55 is an a 2-oxocarboxylate binding site. Serine 137 and glutamine 159 together coordinate FMN. Tyrosine 161 provides a ligand contact to a 2-oxocarboxylate. Threonine 187 contributes to the FMN binding site. Arginine 196 serves as a coordination point for a 2-oxocarboxylate. FMN is bound at residue lysine 277. Histidine 301 functions as the Proton acceptor in the catalytic mechanism. Arginine 304 is a binding site for a 2-oxocarboxylate. Residues 332-336 (DTGIM) and 355-356 (GR) each bind FMN.

The protein belongs to the FMN-dependent alpha-hydroxy acid dehydrogenase family. Requires FMN as cofactor.

It carries out the reaction (S)-lactate + A = pyruvate + AH2. The chain is Putative L-lactate dehydrogenase (lldD) from Mycobacterium tuberculosis (strain ATCC 25618 / H37Rv).